Here is a 367-residue protein sequence, read N- to C-terminus: Cyclin-Y-like protein 1 (367 aa).

3 positions are modified to phosphoserine: S73, S111, and S118. The Cyclin N-terminal domain maps to 186–291 (EYFKHDPEHK…FLELLQFNIN (106 aa)). Residue S352 is modified to Phosphoserine.

This sequence belongs to the cyclin family. Cyclin Y subfamily. In terms of assembly, interacts with CDK16; this interaction mutually increases the stability of CDK16 and CCNYL1 and increases the kinase activity of CDK16. Highly expressed in the testis. Largely restricted to germ cells in the testis.

The protein localises to the cell membrane. Key regulator of Wnt signaling implicated in various biological processes including male fertility, embryonic neurogenesis and cortex development. Activates the cyclin-dependent kinase CDK16, and promotes sperm maturation. The polypeptide is Cyclin-Y-like protein 1 (Mus musculus (Mouse)).